The primary structure comprises 384 residues: Monomethylxanthine methyltransferase 2 (384 aa).

Residues Tyr-18, Cys-61, Asn-66, Asp-100, Leu-101, Ser-139, Phe-140, and Cys-156 each coordinate S-adenosyl-L-homocysteine. Tyr-157, His-160, and Trp-161 together coordinate theobromine. Mg(2+) contacts are provided by Asn-178, Phe-262, and Asn-263. Residue Tyr-368 participates in theobromine binding.

The protein belongs to the methyltransferase superfamily. Type-7 methyltransferase family. The cofactor is Mg(2+). Expressed, at low levels, in young leaves, floral buds and immature fruits (grains), but not in old leaves and mature fruits. Highly expressed in developing endosperm and flower buds. Detected in young leaves.

It catalyses the reaction 7-methylxanthine + S-adenosyl-L-methionine = theobromine + S-adenosyl-L-homocysteine + H(+). It participates in alkaloid biosynthesis. Functionally, involved in the biosynthesis of caffeine. Catalyzes the conversion of 7-methylxanthine (7mX) to theobromine and with a lower activity of paraxanthine to caffeine. Does not have 1-N-methylation activity. This is Monomethylxanthine methyltransferase 2 from Coffea arabica (Arabian coffee).